The sequence spans 179 residues: Ribosome maturation factor RimM (179 aa).

In terms of domain architecture, PRC barrel spans Val-102–Leu-175.

Belongs to the RimM family. In terms of assembly, binds ribosomal protein uS19.

The protein resides in the cytoplasm. An accessory protein needed during the final step in the assembly of 30S ribosomal subunit, possibly for assembly of the head region. Essential for efficient processing of 16S rRNA. May be needed both before and after RbfA during the maturation of 16S rRNA. It has affinity for free ribosomal 30S subunits but not for 70S ribosomes. The protein is Ribosome maturation factor RimM of Frankia casuarinae (strain DSM 45818 / CECT 9043 / HFP020203 / CcI3).